The chain runs to 159 residues: MKIRVGHGYDVHRWGSDKPLILGGVEIEHHQGLVAHSDGDVVLHAVTDAVLGALALGDIGQHFPDTDERYAGADSAELLSHAVSLCQEKEFKTGNIDVTIVAQAPKMAPHIDDMRSSIAQCLKTCIDNVNVKATTTEKLGFVGREEGIACHAVVLMESF.

Positions 10 and 12 each coordinate a divalent metal cation. Residues 10–12 and 36–37 each bind 4-CDP-2-C-methyl-D-erythritol 2-phosphate; these read DVH and HS. H44 is an a divalent metal cation binding site. 4-CDP-2-C-methyl-D-erythritol 2-phosphate contacts are provided by residues 58 to 60, 63 to 67, 102 to 108, 134 to 137, F141, and R144; these read DIG, FPDTD, AQAPKMA, and TTTE.

Belongs to the IspF family. In terms of assembly, homotrimer. It depends on a divalent metal cation as a cofactor.

The catalysed reaction is 4-CDP-2-C-methyl-D-erythritol 2-phosphate = 2-C-methyl-D-erythritol 2,4-cyclic diphosphate + CMP. Its pathway is isoprenoid biosynthesis; isopentenyl diphosphate biosynthesis via DXP pathway; isopentenyl diphosphate from 1-deoxy-D-xylulose 5-phosphate: step 4/6. Its function is as follows. Involved in the biosynthesis of isopentenyl diphosphate (IPP) and dimethylallyl diphosphate (DMAPP), two major building blocks of isoprenoid compounds. Catalyzes the conversion of 4-diphosphocytidyl-2-C-methyl-D-erythritol 2-phosphate (CDP-ME2P) to 2-C-methyl-D-erythritol 2,4-cyclodiphosphate (ME-CPP) with a corresponding release of cytidine 5-monophosphate (CMP). The sequence is that of 2-C-methyl-D-erythritol 2,4-cyclodiphosphate synthase from Idiomarina loihiensis (strain ATCC BAA-735 / DSM 15497 / L2-TR).